We begin with the raw amino-acid sequence, 71 residues long: MSDALEARVMELEIRLAHQEDLLQSLNQTMIEQQQRIDSLQLQMEGLRQRLAAVIENPLMDPNQEPPPPHY.

It belongs to the SlyX family.

This is Protein SlyX homolog from Thioalkalivibrio sulfidiphilus (strain HL-EbGR7).